Here is a 416-residue protein sequence, read N- to C-terminus: Multifunctional CCA protein (416 aa).

Gly-8 and Arg-11 together coordinate ATP. Gly-8 and Arg-11 together coordinate CTP. Positions 21 and 23 each coordinate Mg(2+). Residues Arg-91, Arg-137, and Arg-140 each coordinate ATP. CTP is bound by residues Arg-91, Arg-137, and Arg-140. The 102-residue stretch at 228–329 (TGVHTLMVLA…VKIFDKADFW (102 aa)) folds into the HD domain.

It belongs to the tRNA nucleotidyltransferase/poly(A) polymerase family. Bacterial CCA-adding enzyme type 1 subfamily. In terms of assembly, monomer. Can also form homodimers and oligomers. It depends on Mg(2+) as a cofactor. Ni(2+) is required as a cofactor.

It carries out the reaction a tRNA precursor + 2 CTP + ATP = a tRNA with a 3' CCA end + 3 diphosphate. The catalysed reaction is a tRNA with a 3' CCA end + 2 CTP + ATP = a tRNA with a 3' CCACCA end + 3 diphosphate. Catalyzes the addition and repair of the essential 3'-terminal CCA sequence in tRNAs without using a nucleic acid template. Adds these three nucleotides in the order of C, C, and A to the tRNA nucleotide-73, using CTP and ATP as substrates and producing inorganic pyrophosphate. tRNA 3'-terminal CCA addition is required both for tRNA processing and repair. Also involved in tRNA surveillance by mediating tandem CCA addition to generate a CCACCA at the 3' terminus of unstable tRNAs. While stable tRNAs receive only 3'-terminal CCA, unstable tRNAs are marked with CCACCA and rapidly degraded. The chain is Multifunctional CCA protein from Shewanella baltica (strain OS223).